Reading from the N-terminus, the 490-residue chain is Gallate decarboxylase (490 aa).

Residue aspartate 165 coordinates Mn(2+). Residues 168 to 170 (IHR) and glycine 187 each bind prenylated FMN. Position 233 (glutamate 233) interacts with Mn(2+). Glutamate 289 serves as the catalytic Proton acceptor.

Belongs to the UbiD family. Requires prenylated FMN as cofactor. The cofactor is Mn(2+).

It carries out the reaction 3,4,5-trihydroxybenzoate + H(+) = 1,2,3-trihydroxybenzene + CO2. It catalyses the reaction 3,4-dihydroxybenzoate + H(+) = catechol + CO2. In terms of biological role, involved in tannin degradation. Catalyzes the decarboxylation of gallic acid and protocatechuic acid to pyrogallol and catechol, respectively. This Lactiplantibacillus plantarum (strain ATCC BAA-793 / NCIMB 8826 / WCFS1) (Lactobacillus plantarum) protein is Gallate decarboxylase.